The chain runs to 426 residues: Lipoyl synthase, mitochondrial (426 aa).

A mitochondrion-targeting transit peptide spans 1–29 (MASPAPLQRLQAPLRRSLARAAVLSSRTY). The span at 27–42 (RTYATIPSPSDPGLTQ) shows a compositional bias: polar residues. The interval 27–61 (RTYATIPSPSDPGLTQSSPSPAASTTPAKKAPRPS) is disordered. The span at 43–55 (SSPSPAASTTPAK) shows a compositional bias: low complexity. 7 residues coordinate [4Fe-4S] cluster: C140, C145, C151, C171, C175, C178, and S388. Residues 154-377 (GNDKSAATAT…KQRALDMGFL (224 aa)) enclose the Radical SAM core domain.

This sequence belongs to the radical SAM superfamily. Lipoyl synthase family. [4Fe-4S] cluster serves as cofactor.

The protein resides in the mitochondrion. The enzyme catalyses [[Fe-S] cluster scaffold protein carrying a second [4Fe-4S](2+) cluster] + N(6)-octanoyl-L-lysyl-[protein] + 2 oxidized [2Fe-2S]-[ferredoxin] + 2 S-adenosyl-L-methionine + 4 H(+) = [[Fe-S] cluster scaffold protein] + N(6)-[(R)-dihydrolipoyl]-L-lysyl-[protein] + 4 Fe(3+) + 2 hydrogen sulfide + 2 5'-deoxyadenosine + 2 L-methionine + 2 reduced [2Fe-2S]-[ferredoxin]. The protein operates within protein modification; protein lipoylation via endogenous pathway; protein N(6)-(lipoyl)lysine from octanoyl-[acyl-carrier-protein]: step 2/2. Its function is as follows. Catalyzes the radical-mediated insertion of two sulfur atoms into the C-6 and C-8 positions of the octanoyl moiety bound to the lipoyl domains of lipoate-dependent enzymes, thereby converting the octanoylated domains into lipoylated derivatives. This Podospora anserina (strain S / ATCC MYA-4624 / DSM 980 / FGSC 10383) (Pleurage anserina) protein is Lipoyl synthase, mitochondrial.